We begin with the raw amino-acid sequence, 412 residues long: Multidrug resistance protein MdtA (412 aa).

Residues 1–21 (MKGSNIRRWGAALAVVIIAGA) form the signal peptide. Disordered regions lie at residues 33–53 (GSGAPAAGQGPQGPGGARHGR) and 389–412 (VVTASSGEQAQPAPRQSGKHGARS).

It belongs to the membrane fusion protein (MFP) (TC 8.A.1) family. In terms of assembly, part of a tripartite efflux system composed of MdtA, MdtB and MdtC.

Its subcellular location is the cell inner membrane. In Klebsiella pneumoniae subsp. pneumoniae (strain ATCC 700721 / MGH 78578), this protein is Multidrug resistance protein MdtA.